Reading from the N-terminus, the 515-residue chain is RNA-splicing ligase RtcB homolog (515 aa).

The Mn(2+) site is built by Asp-129, Cys-132, His-237, His-269, and His-363. Position 236–240 (236–240) interacts with GMP; sequence NHYAE. GMP-binding positions include 363–364, 412–415, Ser-419, 438–441, and Lys-514; these read HN, GGTM, and HGAG. His-438 serves as the catalytic GMP-histidine intermediate.

This sequence belongs to the RtcB family. In terms of assembly, catalytic component of the tRNA-splicing ligase complex. Mn(2+) serves as cofactor.

The enzyme catalyses a 3'-end 3'-phospho-ribonucleotide-RNA + a 5'-end dephospho-ribonucleoside-RNA + GTP = a ribonucleotidyl-ribonucleotide-RNA + GMP + diphosphate. It catalyses the reaction a 3'-end 2',3'-cyclophospho-ribonucleotide-RNA + a 5'-end dephospho-ribonucleoside-RNA + GTP + H2O = a ribonucleotidyl-ribonucleotide-RNA + GMP + diphosphate + H(+). Its function is as follows. Catalytic subunit of the tRNA-splicing ligase complex that acts by directly joining spliced tRNA halves to mature-sized tRNAs by incorporating the precursor-derived splice junction phosphate into the mature tRNA as a canonical 3',5'-phosphodiester. May act as an RNA ligase with broad substrate specificity, and may function toward other RNAs. The sequence is that of RNA-splicing ligase RtcB homolog from Ostreococcus tauri.